Here is a 663-residue protein sequence, read N- to C-terminus: Translation factor GUF1, mitochondrial (663 aa).

A mitochondrion-targeting transit peptide spans 1-37 (MRGCLQSVRLLTTALGQSPRRPLPFAFRLPPNASRLF). A tr-type G domain is found at 65–245 (ERYRNFCIVA…TIVEQIPAPI (181 aa)). GTP is bound by residues 74 to 81 (AHVDHGKS), 138 to 142 (DTPGH), and 192 to 195 (NKVD).

Belongs to the TRAFAC class translation factor GTPase superfamily. Classic translation factor GTPase family. LepA subfamily.

The protein localises to the mitochondrion inner membrane. The catalysed reaction is GTP + H2O = GDP + phosphate + H(+). Promotes mitochondrial protein synthesis. May act as a fidelity factor of the translation reaction, by catalyzing a one-codon backward translocation of tRNAs on improperly translocated ribosomes. Binds to mitochondrial ribosomes in a GTP-dependent manner. In Uncinocarpus reesii (strain UAMH 1704), this protein is Translation factor GUF1, mitochondrial.